The chain runs to 264 residues: 3-methyl-2-oxobutanoate hydroxymethyltransferase (264 aa).

Positions 42 and 81 each coordinate Mg(2+). 3-methyl-2-oxobutanoate contacts are provided by residues aspartate 42–serine 43, aspartate 81, and lysine 110. Residue glutamate 112 participates in Mg(2+) binding. Residue glutamate 179 is the Proton acceptor of the active site.

Belongs to the PanB family. As to quaternary structure, homodecamer; pentamer of dimers. Mg(2+) serves as cofactor.

It is found in the cytoplasm. The catalysed reaction is 3-methyl-2-oxobutanoate + (6R)-5,10-methylene-5,6,7,8-tetrahydrofolate + H2O = 2-dehydropantoate + (6S)-5,6,7,8-tetrahydrofolate. Its pathway is cofactor biosynthesis; (R)-pantothenate biosynthesis; (R)-pantoate from 3-methyl-2-oxobutanoate: step 1/2. In terms of biological role, catalyzes the reversible reaction in which hydroxymethyl group from 5,10-methylenetetrahydrofolate is transferred onto alpha-ketoisovalerate to form ketopantoate. This is 3-methyl-2-oxobutanoate hydroxymethyltransferase from Francisella tularensis subsp. tularensis (strain FSC 198).